A 394-amino-acid chain; its full sequence is Class II hydrophobin TH1 (394 aa).

Positions 1–16 (MKFLAAASLLVASTLA) are cleaved as a signal peptide. The interval 17 to 42 (VPTSSGGSCRPRPPPGGGNGGNGGNG) is disordered. Positions 33-42 (GGNGGNGGNG) are enriched in gly residues. A hydrophobin 1 region spans residues 48-117 (GYQPCPAGLY…GQAVLCQDSI (70 aa)). Disulfide bonds link cysteine 52–cysteine 101, cysteine 62–cysteine 92, cysteine 63–cysteine 75, and cysteine 102–cysteine 113. Residues 135 to 157 (GNGGNNGGNTDYPGGNGGNNGGN) are disordered. Residues 148-157 (GGNGGNNGGN) show a composition bias toward gly residues. 2 hydrophobin regions span residues 200-270 (GYQA…QPAI) and 326-394 (GSFK…CTGA).

Belongs to the cerato-ulmin hydrophobin family. In terms of assembly, homotetramer. Further self-assembles to form highly ordered films at water-air interfaces through intermolecular interactions. In terms of processing, several N-termini starting at positions 17, 20, 22, 28 and 48 have been identified by direct sequencing. Contains a number of intrachain disulfide bonds. Post-translationally, not glycosylated.

The protein resides in the secreted. It localises to the cell wall. Aerial growth, conidiation, and dispersal of filamentous fungi in the environment rely upon a capability of their secreting small amphipathic proteins called hydrophobins (HPBs) with low sequence identity. Class I can self-assemble into an outermost layer of rodlet bundles on aerial cell surfaces, conferring cellular hydrophobicity that supports fungal growth, development and dispersal; whereas Class II form highly ordered films at water-air interfaces through intermolecular interactions but contribute nothing to the rodlet structure. TH1 is a class II hydrophobin that reduces water surface tension dramatically upon assembly at the water-air interface and plays a role in the formation of aerial hyphae. The sequence is that of Class II hydrophobin TH1 (TH1) from Claviceps fusiformis (Ergot fungus).